Here is a 1024-residue protein sequence, read N- to C-terminus: SWI/SNF-related matrix-associated actin-dependent regulator of chromatin subfamily A containing DEAD/H box 1 (1024 aa).

N-acetylmethionine is present on methionine 1. Residues 1–83 (MNLFNLDRFR…NESKASLSCF (83 aa)) are disordered. Residues 7-19 (DRFRFEKRSKIEE) show a composition bias toward basic and acidic residues. At threonine 54 the chain carries Phosphothreonine. Serine 57 is subject to Phosphoserine. Lysine 77 is covalently cross-linked (Glycyl lysine isopeptide (Lys-Gly) (interchain with G-Cter in SUMO2)). 6 positions are modified to phosphoserine: serine 79, serine 124, serine 127, serine 132, serine 145, and serine 151. Residues 156 to 198 (LKDAKLQTLKELFPQRSDSDLLKLIDSTSTMDGAIAAALLKFG) enclose the CUE 1 domain. The tract at residues 201-250 (GGGPRKRKLSSSSEAYEEDEANDDQSLKKPRGDRREESNESAEASSNWEK) is disordered. Phosphoserine occurs at positions 210 and 213. A Phosphotyrosine modification is found at tyrosine 216. A phosphoserine mark is found at serine 238 and serine 241. The CUE 2 domain occupies 250–293 (KQESIVLKLQKEFPNFDKQELREVLKEHEWMYTEALESLKVFAE). Residue serine 301 is modified to Phosphoserine. The disordered stretch occupies residues 331–369 (SMKPQNGFNKKRKKNVFNPKKAVEDSEYDSGSDAGSSLD). Residues lysine 333 and lysine 469 each participate in a glycyl lysine isopeptide (Lys-Gly) (interchain with G-Cter in SUMO2) cross-link. The 169-residue stretch at 507-675 (ALVHKHGLNG…MSLLNFVMPH (169 aa)) folds into the Helicase ATP-binding domain. 519-527 (ADEMGLGKT) is a binding site for ATP. Positions 626 to 629 (DEGH) match the DEGH box motif. The short motif at 719-736 (RRVKEEVLKLLPPKKDQI) is the Nuclear localization signal element. Lysine 722 participates in a covalent cross-link: Glycyl lysine isopeptide (Lys-Gly) (interchain with G-Cter in SUMO2). One can recognise a Helicase C-terminal domain in the interval 856 to 1008 (TLGCILSELK…MTTVDEADEG (153 aa)). 895–902 (YLRLDGKT) provides a ligand contact to ATP. A Glycyl lysine isopeptide (Lys-Gly) (interchain with G-Cter in SUMO2) cross-link involves residue lysine 994. The DEAD box motif lies at 1003–1006 (DEAD).

It belongs to the SNF2/RAD54 helicase family. In terms of assembly, binds to DNA preferentially in the vicinity of transcriptional start sites. Interacts with MSH2 and TRIM28. Part of a complex composed of TRIM28, HDAC1, HDAC2 and EHMT2. Interacts with PCNA.

Its subcellular location is the nucleus. The protein localises to the chromosome. It catalyses the reaction ATP + H2O = ADP + phosphate + H(+). In terms of biological role, DNA helicase that possesses intrinsic ATP-dependent nucleosome-remodeling activity and is both required for DNA repair and heterochromatin organization. Promotes DNA end resection of double-strand breaks (DSBs) following DNA damage: probably acts by weakening histone DNA interactions in nucleosomes flanking DSBs. Required for the restoration of heterochromatin organization after replication. Acts at replication sites to facilitate the maintenance of heterochromatin by directing H3 and H4 histones deacetylation, H3 'Lys-9' trimethylation (H3K9me3) and restoration of silencing. This is SWI/SNF-related matrix-associated actin-dependent regulator of chromatin subfamily A containing DEAD/H box 1 (Smarcad1) from Rattus norvegicus (Rat).